The sequence spans 348 residues: NADH-ubiquinone oxidoreductase chain 2 (348 aa).

11 consecutive transmembrane segments (helical) span residues 3–23 (PVVL…TFIG), 25–45 (HWLL…PLMI), 67–87 (SALL…WSLL), 95–115 (ATLV…HFWL), 118–138 (VLQG…KLAP), 149–171 (LNSN…GGLN), 178–198 (ILAY…HYSP), 203–223 (LNLA…KLFN), 240–260 (LSII…LSGF), 274–294 (DLAI…FFYL), and 324–344 (LILM…PTIF).

This sequence belongs to the complex I subunit 2 family.

It localises to the mitochondrion inner membrane. The catalysed reaction is a ubiquinone + NADH + 5 H(+)(in) = a ubiquinol + NAD(+) + 4 H(+)(out). Core subunit of the mitochondrial membrane respiratory chain NADH dehydrogenase (Complex I) that is believed to belong to the minimal assembly required for catalysis. Complex I functions in the transfer of electrons from NADH to the respiratory chain. The immediate electron acceptor for the enzyme is believed to be ubiquinone. The protein is NADH-ubiquinone oxidoreductase chain 2 (MT-ND2) of Squalus acanthias (Spiny dogfish).